Here is a 291-residue protein sequence, read N- to C-terminus: Citrate lyase subunit beta (291 aa).

Residues Arg66 and Glu129 each coordinate substrate. Positions 129 and 156 each coordinate Mg(2+).

This sequence belongs to the HpcH/HpaI aldolase family. Citrate lyase beta subunit subfamily. As to quaternary structure, oligomer with a subunit composition of (alpha,beta,gamma)6. It depends on Mg(2+) as a cofactor.

It localises to the cytoplasm. It catalyses the reaction citrate = oxaloacetate + acetate. The enzyme catalyses (3S)-citryl-CoA = oxaloacetate + acetyl-CoA. Functionally, represents a citryl-ACP lyase. The polypeptide is Citrate lyase subunit beta (citE) (Haemophilus influenzae (strain ATCC 51907 / DSM 11121 / KW20 / Rd)).